We begin with the raw amino-acid sequence, 1253 residues long: Pleckstrin homology-like domain family B member 2 (1253 aa).

The span at 1-12 shows a compositional bias: basic and acidic residues; it reads MEEHSYIQKELD. Disordered regions lie at residues 1–43, 60–159, and 187–212; these read MEEH…PKKY, LTLS…KSHD, and DAGP…RKMS. Over residues 29–43 the composition is skewed to polar residues; sequence NDSQNMMESLSPKKY. 2 positions are modified to phosphoserine: Ser-71 and Ser-73. Positions 74–96 are enriched in polar residues; sequence PLGTSVRSSPSLAKIQGSKQFSY. Basic and acidic residues predominate over residues 126–144; it reads ADFDHYTGRDSERALRLSE. 5 positions are modified to phosphoserine: Ser-157, Ser-204, Ser-212, Ser-242, and Ser-245. The interval 265–286 is disordered; sequence NQLTPLSLPPRNSLGNSKRTKL. Ser-330, Ser-334, Ser-348, Ser-351, Ser-384, Ser-387, Ser-415, Ser-420, Ser-468, Ser-489, and Ser-501 each carry phosphoserine. Thr-504 carries the post-translational modification Phosphothreonine. Phosphoserine is present on Ser-513. The tract at residues 525 to 567 is disordered; the sequence is LSQSSASFFTPRSTRNDELLSDLTRTPPPPSSTFPKASSESSY. Thr-550 and Thr-574 each carry phosphothreonine. Coiled coils occupy residues 584-696 and 722-807; these read SQEL…LDNC and FEDL…LCNL. A Phosphothreonine modification is found at Thr-898. A coiled-coil region spans residues 1032 to 1098; the sequence is IARIEEMERL…QKLIEKEVKI (67 aa). The 104-residue stretch at 1143-1246 folds into the PH domain; it reads EKTCRGFLIK…WMDVIVTGAE (104 aa).

Interacts with FLNC. Interacts with AMOTL2; interaction may facilitate PHLDB2 localization to the myotube podosome cortex that surrounds the core. Part of a cortical microtubule stabilization complex (CMSC) composed of KANK1, PPFIA1, PPFIBP1, ERC1/ELKS, PHLDB2/LL5beta, CLASPs, KIF21A and possibly additional interactors; within CMSCs KANK1 and PHLDB2/LL5beta appear to be the core components for targeting of microtubule-binding proteins KIF21A and CLASPs, whereas PPFIA1, PPFIBP1 and ERC1/ELKS serve as scaffolds for protein clustering.

It localises to the cytoplasm. The protein localises to the cell cortex. The protein resides in the membrane. It is found in the cell projection. Its subcellular location is the podosome. Functionally, seems to be involved in the assembly of the postsynaptic apparatus. May play a role in acetyl-choline receptor (AChR) aggregation in the postsynaptic membrane. The sequence is that of Pleckstrin homology-like domain family B member 2 (PHLDB2) from Homo sapiens (Human).